Here is a 457-residue protein sequence, read N- to C-terminus: Tubulin alpha chain (457 aa).

The GTP site is built by Gln12, Glu77, Ser146, Gly150, Thr151, Thr186, Asn213, and Asn235. A Mg(2+)-binding site is contributed by Glu77.

This sequence belongs to the tubulin family. In terms of assembly, dimer of alpha and beta chains. A typical microtubule is a hollow water-filled tube with an outer diameter of 25 nm and an inner diameter of 15 nM. Alpha-beta heterodimers associate head-to-tail to form protofilaments running lengthwise along the microtubule wall with the beta-tubulin subunit facing the microtubule plus end conferring a structural polarity. Microtubules usually have 13 protofilaments but different protofilament numbers can be found in some organisms and specialized cells. It depends on Mg(2+) as a cofactor. In terms of processing, undergoes a tyrosination/detyrosination cycle, the cyclic removal and re-addition of a C-terminal tyrosine residue by the enzymes tubulin tyrosine carboxypeptidase (TTCP) and tubulin tyrosine ligase (TTL), respectively.

The protein resides in the cytoplasm. It localises to the cytoskeleton. It carries out the reaction GTP + H2O = GDP + phosphate + H(+). Tubulin is the major constituent of microtubules, a cylinder consisting of laterally associated linear protofilaments composed of alpha- and beta-tubulin heterodimers. Microtubules grow by the addition of GTP-tubulin dimers to the microtubule end, where a stabilizing cap forms. Below the cap, tubulin dimers are in GDP-bound state, owing to GTPase activity of alpha-tubulin. The polypeptide is Tubulin alpha chain (tubA) (Dictyostelium discoideum (Social amoeba)).